The sequence spans 238 residues: MVFFPELEQARLLRRYKRFLADIELANGEQLTIHCPNTGSMLNCMREGGQVWFSRSNDPKRKLPGTWEISETPQGRLACVNTGRANALVEEALRAGTILELAGFELLKREVAYGEERSRIDFYLEFADGRPAYVEVKSVTLGFPDTPVAAFPDAVTQRGAKHLRELAALARQGIRAVQLYCVNLTGIEAVRPAEEIDAAYAQALRAAVAEGVEVLAYGTRLDARGIVIDRPLPVLLNP.

It belongs to the SfsA family.

The sequence is that of Sugar fermentation stimulation protein homolog from Pseudomonas entomophila (strain L48).